The sequence spans 181 residues: Adenine phosphoribosyltransferase (181 aa).

The protein belongs to the purine/pyrimidine phosphoribosyltransferase family. As to quaternary structure, homodimer.

Its subcellular location is the cytoplasm. The catalysed reaction is AMP + diphosphate = 5-phospho-alpha-D-ribose 1-diphosphate + adenine. It functions in the pathway purine metabolism; AMP biosynthesis via salvage pathway; AMP from adenine: step 1/1. In terms of biological role, catalyzes a salvage reaction resulting in the formation of AMP, that is energically less costly than de novo synthesis. This is Adenine phosphoribosyltransferase from Vibrio vulnificus (strain CMCP6).